Here is a 53-residue protein sequence, read N- to C-terminus: ATP synthase protein 8 (53 aa).

Residues 9–29 (WLILFFIFSITLVIFNILNYF) traverse the membrane as a helical segment.

The protein belongs to the ATPase protein 8 family. As to quaternary structure, F-type ATPases have 2 components, CF(1) - the catalytic core - and CF(0) - the membrane proton channel.

It localises to the mitochondrion membrane. Functionally, mitochondrial membrane ATP synthase (F(1)F(0) ATP synthase or Complex V) produces ATP from ADP in the presence of a proton gradient across the membrane which is generated by electron transport complexes of the respiratory chain. F-type ATPases consist of two structural domains, F(1) - containing the extramembraneous catalytic core and F(0) - containing the membrane proton channel, linked together by a central stalk and a peripheral stalk. During catalysis, ATP synthesis in the catalytic domain of F(1) is coupled via a rotary mechanism of the central stalk subunits to proton translocation. Part of the complex F(0) domain. Minor subunit located with subunit a in the membrane. The chain is ATP synthase protein 8 (mt:ATPase8) from Anopheles quadrimaculatus (Common malaria mosquito).